Here is a 249-residue protein sequence, read N- to C-terminus: PF03932 family protein CutC (249 aa).

This sequence belongs to the CutC family.

The protein resides in the cytoplasm. This Bacteroides thetaiotaomicron (strain ATCC 29148 / DSM 2079 / JCM 5827 / CCUG 10774 / NCTC 10582 / VPI-5482 / E50) protein is PF03932 family protein CutC.